The primary structure comprises 174 residues: NADH-quinone oxidoreductase subunit I (174 aa).

2 consecutive 4Fe-4S ferredoxin-type domains span residues 44–74 (LNRY…VEGD) and 90–119 (RVYQ…MTND). Positions 54, 57, 60, 64, 99, 102, 105, and 109 each coordinate [4Fe-4S] cluster.

The protein belongs to the complex I 23 kDa subunit family. In terms of assembly, NDH-1 is composed of 14 different subunits. Subunits NuoA, H, J, K, L, M, N constitute the membrane sector of the complex. [4Fe-4S] cluster is required as a cofactor.

The protein resides in the cell membrane. The enzyme catalyses a quinone + NADH + 5 H(+)(in) = a quinol + NAD(+) + 4 H(+)(out). NDH-1 shuttles electrons from NADH, via FMN and iron-sulfur (Fe-S) centers, to quinones in the respiratory chain. The immediate electron acceptor for the enzyme in this species is believed to be menaquinone. Couples the redox reaction to proton translocation (for every two electrons transferred, four hydrogen ions are translocated across the cytoplasmic membrane), and thus conserves the redox energy in a proton gradient. This is NADH-quinone oxidoreductase subunit I from Mycobacterium sp. (strain JLS).